The primary structure comprises 142 residues: Large ribosomal subunit protein bL21 (142 aa).

The span at 73-84 (KRRRQNSKRTRG) shows a compositional bias: basic residues. A disordered region spans residues 73-142 (KRRRQNSKRT…KAAAKAESAE (70 aa)). The span at 107–125 (KAAEKKAPKADAAEGEAAK) shows a compositional bias: basic and acidic residues. Basic residues predominate over residues 126-135 (PKKAAPKKAA).

Belongs to the bacterial ribosomal protein bL21 family. Part of the 50S ribosomal subunit. Contacts protein L20.

This protein binds to 23S rRNA in the presence of protein L20. The polypeptide is Large ribosomal subunit protein bL21 (Brucella canis (strain ATCC 23365 / NCTC 10854 / RM-666)).